Consider the following 657-residue polypeptide: Protein translocase subunit SecA 2 (657 aa).

ATP contacts are provided by residues Gln93, 111–115 (GEGKT), and Asp531.

This sequence belongs to the SecA family. Monomer and homodimer. Part of the essential Sec protein translocation apparatus which comprises SecA, SecYEG and auxiliary proteins SecDF. Other proteins may also be involved.

The protein localises to the cell inner membrane. It localises to the cytoplasm. The enzyme catalyses ATP + H2O + cellular proteinSide 1 = ADP + phosphate + cellular proteinSide 2.. In terms of biological role, part of the Sec protein translocase complex. Interacts with the SecYEG preprotein conducting channel. Has a central role in coupling the hydrolysis of ATP to the transfer of proteins into and across the cell membrane, serving as an ATP-driven molecular motor driving the stepwise translocation of polypeptide chains across the membrane. This chain is Protein translocase subunit SecA 2, found in Rhodopirellula baltica (strain DSM 10527 / NCIMB 13988 / SH1).